The chain runs to 192 residues: MSSKEQKTPNEQVSEEMENAAEQQVEATQETGEGVDPRVAELEAQLAAAVQRERESLLRAKAEVENIRRRTEQDVEKAHKFALEKFSAELLPVIDNLERALDTADKTNAELAAMIEGVELTLKSLLDAVGKYGIQVVSETNVPFNPEVHQAMTMLESADHEPNHVMMVMQKGYTLNGRLLRPAMVAVSKAKA.

The interval 1–34 is disordered; it reads MSSKEQKTPNEQVSEEMENAAEQQVEATQETGEG. The span at 21–31 shows a compositional bias: polar residues; sequence AEQQVEATQET.

It belongs to the GrpE family. In terms of assembly, homodimer.

The protein resides in the cytoplasm. In terms of biological role, participates actively in the response to hyperosmotic and heat shock by preventing the aggregation of stress-denatured proteins, in association with DnaK and GrpE. It is the nucleotide exchange factor for DnaK and may function as a thermosensor. Unfolded proteins bind initially to DnaJ; upon interaction with the DnaJ-bound protein, DnaK hydrolyzes its bound ATP, resulting in the formation of a stable complex. GrpE releases ADP from DnaK; ATP binding to DnaK triggers the release of the substrate protein, thus completing the reaction cycle. Several rounds of ATP-dependent interactions between DnaJ, DnaK and GrpE are required for fully efficient folding. This chain is Protein GrpE, found in Yersinia enterocolitica serotype O:8 / biotype 1B (strain NCTC 13174 / 8081).